We begin with the raw amino-acid sequence, 87 residues long: Acyl carrier protein TtuC (87 aa).

The Carrier domain maps to 11-87 (ITAEDVQQWL…HALSQFIAAK (77 aa)). Ser-48 bears the O-(pantetheine 4'-phosphoryl)serine mark.

Pantetheine 4'-phosphate is required as a cofactor.

In terms of biological role, carrier protein likely involved in the biosynthesis of a polyyne metabolite. Accepts as substrate the activated form of decanoic acid from TtuA. This is Acyl carrier protein TtuC from Teredinibacter turnerae (strain ATCC 39867 / T7901).